We begin with the raw amino-acid sequence, 38 residues long: RapG inhibitor (38 aa).

A propeptide spanning residues 1 to 33 (MKRFLIGAGVAAVILSGWFIADHQTHSQEMKVA) is cleaved from the precursor.

Belongs to the Phr family. Post-translationally, contains a predicted signal peptide cleavage site in the N-terminal region, however the propeptide is probably subject to only one processing event, at the N-terminal end of the mature peptide.

The protein localises to the secreted. Its subcellular location is the cytoplasm. In terms of biological role, signaling molecule involved in the regulation of expression of DegU-controlled genes. Secreted during production, but the mature peptide acts intracellularly, indicating that it needs to be imported into the cell to function. Stimulates the DegU-dependent expression of aprE, an extracellular alkaline protease. Acts by inhibiting RapG activity. At high concentrations, represses the DegS-dependent aprE expression. The polypeptide is RapG inhibitor (phrG) (Bacillus subtilis (strain 168)).